Here is a 214-residue protein sequence, read N- to C-terminus: C-type lectin domain family 4 member E (214 aa).

Residues 1 to 22 lie on the Cytoplasmic side of the membrane; that stretch reads MNSTKSPASHHTERGCFKNSQV. Residues 23–45 traverse the membrane as a helical; Signal-anchor for type II membrane protein segment; sequence LSWTIAGASILFLSGCFITRCVV. The Extracellular portion of the chain corresponds to 46-214; sequence TYRSSQISGQ…CEMPEISPLD (169 aa). Residues Cys-80 and Cys-91 are joined by a disulfide bond. The C-type lectin domain occupies 87 to 206; it reads YQSSCYFFST…CFYSMPWICE (120 aa). Asn-107 is a glycosylation site (N-linked (GlcNAc...) asparagine). Disulfide bonds link Cys-108–Cys-205 and Cys-179–Cys-197. 7 residues coordinate Ca(2+): Val-117, Glu-123, Glu-169, Asn-171, Asn-193, Asp-194, and Glu-206. Residues 169-171 carry the Confers specificity for glucose/mannose-type carbohydrates motif; the sequence is EPN.

As to quaternary structure, monomer and homodimer. Interacts with signaling adapter Fc receptor gamma chain/FCER1G to form a functional complex; the interaction is direct. Alternatively, acts as a bridge for interaction between CLEC4D and FCER1G. A heterodimer of CLEC4E and CLEC4D associates with FCER1G to form a functional complex. Interacts with SAP130 nuclear protein that is released from necrotic cells; the interaction is direct. As to expression, highly expressed in macrophages in response to stimulation with bacterial glycolipids and pro-inflammatory cytokines. Expressed in dendritic cells (at protein level) in response to stimulation with mycobacterial trehalose 6,6'-dimycolate (TDM).

Its subcellular location is the cell membrane. It is found in the cell projection. The protein localises to the phagocytic cup. In terms of biological role, calcium-dependent lectin that acts as a pattern recognition receptor (PRR) of the innate immune system: recognizes damage-associated molecular patterns (DAMPs) of abnormal self and pathogen-associated molecular patterns (PAMPs) of bacteria and fungi. The PAMPs notably include mycobacterial trehalose 6,6'-dimycolate (TDM), a cell wall glycolipid with potent adjuvant immunomodulatory functions. Interacts with signaling adapter Fc receptor gamma chain/FCER1G to form a functional complex in myeloid cells. Binding of mycobacterial trehalose 6,6'-dimycolate (TDM) to this receptor complex leads to phosphorylation of the immunoreceptor tyrosine-based activation motif (ITAM) of FCER1G, triggering activation of SYK, CARD9 and NF-kappa-B, consequently driving maturation of antigen-presenting cells and shaping antigen-specific priming of T-cells toward effector T-helper 1 (Th1) and T-helper 17 (Th17) cell subtypes. Also recognizes alpha-mannose residues on pathogenic fungi of the genus Malassezia and mediates macrophage activation. Through recognition of DAMPs released upon nonhomeostatic cell death, enables immune sensing of damaged self and promotes inflammatory cell infiltration into the damaged tissue. This chain is C-type lectin domain family 4 member E, found in Mus musculus (Mouse).